The primary structure comprises 522 residues: Maturase K (522 aa).

The protein belongs to the intron maturase 2 family. MatK subfamily.

It is found in the plastid. The protein resides in the chloroplast. Usually encoded in the trnK tRNA gene intron. Probably assists in splicing its own and other chloroplast group II introns. The chain is Maturase K from Watsonia angusta.